We begin with the raw amino-acid sequence, 309 residues long: Glutaminase (309 aa).

Substrate contacts are provided by Ser64, Asn114, Glu160, Asn167, Tyr191, Tyr243, and Val261.

Belongs to the glutaminase family. As to quaternary structure, homotetramer.

It catalyses the reaction L-glutamine + H2O = L-glutamate + NH4(+). The protein is Glutaminase of Rhizobium leguminosarum bv. trifolii (strain WSM2304).